Consider the following 791-residue polypeptide: Cullin-2 (791 aa).

Residues 722 to 784 enclose the Cullin neddylation domain; that stretch reads DRKYYMECAI…KMYIQRTDQN (63 aa). K736 participates in a covalent cross-link: Glycyl lysine isopeptide (Lys-Gly) (interchain with G-Cter in NEDD8).

The protein belongs to the cullin family. In terms of assembly, component of multiple CBC (Cul2-ElonginB-ElonginC) E3 ubiquitin-protein ligase complexes formed of cul-2, elb-1, elc-1, rbx-1 and a variable substrate recognition component. Component of the CBC(fem-1) E3 ubiquitin-protein ligase complex with fem-1, fem-2 and fem-3. The CBC(fem-1) complex interacts with tra-1 and promotes tra-1 degradation. Probable component of the CBC(lrr-1) E3 ubiquitin-protein ligase complex incuding cul-2, elb-1, elc-1, rbx-1 and lrr-1. The CBC(lrr-1) complex interacts with the DNA replisome complex at the end of S phase; the interaction promotes the release of components of the CMG helicase complex (a component of the replisome) from chromatin. Probable component of an CBC(zif-1) E3 ubiquitin-protein ligase including cul-2, elc-1, rbx-1 and zif-1. Part of an E3 ubiquitin-protein ligase complex including cul-2, elc-1 and zyg-11. Interacts with Skp1-related protein skr-10. In terms of processing, neddylated; which enhances the ubiquitination activity of CBC (Cul2-ElonginB-ElonginC) E3 ubiquitin-protein ligase complexes. In adults, highly expressed in meiotic cells and oocytes. In larvae, expressed in many proliferating cell types: P cells during the L1 stage; seam cells when they divide at every molt; vulval and somatic gonad cells in late L3 and L4 stages; and intestinal cells throughout larval development.

It localises to the cytoplasm. Its subcellular location is the nucleus. It functions in the pathway protein modification; protein ubiquitination. Core component of multiple cullin-RING-based CBC (Cul2-ElonginB-ElonginC) E3 ubiquitin-protein ligase complexes which mediate the ubiquitination and subsequent proteasomal degradation of target proteins. As a scaffold protein may contribute to catalysis through positioning of the substrate and the ubiquitin-conjugating enzyme. The functional specificity of the CBC complex depends on the variable substrate recognition component. May function in ubiquitin-mediated degradation of CKIs to target cki-1 for degradation. CBC(zif-1) may ensure germline precursor cell asymmetry by targeting germline proteins for destruction if expressed in non-germline cells. As part of the CBC(fem-1) complex directs ubiquitination of tra-1. As part of the CBC(lrr-1) complex, required for the ubiquitination and dissasembly of the CMG helicase complex from chromatin at the end of DNA replication. Positive cell-cycle regulator that is required at two distinct points in the cell cycle; the G1-to-S-phase transition and mitosis. Also required for proper cytoskeletal movement and mitotic chromosome condensation. This Caenorhabditis elegans protein is Cullin-2.